The sequence spans 631 residues: NADPH oxidoreductase A (631 aa).

Residues 73–212 enclose the Flavodoxin-like domain; sequence ILILYGTEYG…CFDRYIDTVC (140 aa). Residues 79-83 and 160-191 contribute to the FMN site; these read TEYGL and VLAL…KRFR. In terms of domain architecture, FAD-binding FR-type spans 247–480; that stretch reads KKPYSSKLLV…INNNPDFRLP (234 aa). Position 249-299 (249-299) interacts with FAD; the sequence is PYSSKLLVKRVLTKGDKVGIHLEFELGDSELKYVPGDALAILPDNAASEVS. NADP(+) is bound at residue 504 to 630; that stretch reads QERKALGHTG…KEKRYQKDVW (127 aa).

Requires FAD as cofactor. FMN serves as cofactor.

Functionally, probable NADPH oxidoreductase that controls development beyond the mound stage. This chain is NADPH oxidoreductase A (redA), found in Dictyostelium discoideum (Social amoeba).